We begin with the raw amino-acid sequence, 132 residues long: Small ribosomal subunit protein uS11c (132 aa).

This sequence belongs to the universal ribosomal protein uS11 family. Part of the 30S ribosomal subunit.

Its subcellular location is the plastid. The protein resides in the chloroplast. This is Small ribosomal subunit protein uS11c from Cryptomeria japonica (Japanese cedar).